Reading from the N-terminus, the 215-residue chain is UPF0502 protein PP_2442 (215 aa).

Belongs to the UPF0502 family.

This chain is UPF0502 protein PP_2442, found in Pseudomonas putida (strain ATCC 47054 / DSM 6125 / CFBP 8728 / NCIMB 11950 / KT2440).